The following is a 129-amino-acid chain: MLAPQYRLRSTALFGQTIRNGRKKGSRTVVVHVLAGGSRAEELPLPLQEGATAGPRMGLVVSKAVGNAVTRHNTSRKLRHAFRAVMEEDSLDFPVGTTVVIRALPKSATASFEELVGDVRSCIRRALPR.

This sequence belongs to the RnpA family. In terms of assembly, consists of a catalytic RNA component (M1 or rnpB) and a protein subunit.

It carries out the reaction Endonucleolytic cleavage of RNA, removing 5'-extranucleotides from tRNA precursor.. Functionally, RNaseP catalyzes the removal of the 5'-leader sequence from pre-tRNA to produce the mature 5'-terminus. It can also cleave other RNA substrates such as 4.5S RNA. The protein component plays an auxiliary but essential role in vivo by binding to the 5'-leader sequence and broadening the substrate specificity of the ribozyme. The sequence is that of Ribonuclease P protein component from Corynebacterium jeikeium (strain K411).